We begin with the raw amino-acid sequence, 170 residues long: Adenine phosphoribosyltransferase (170 aa).

This sequence belongs to the purine/pyrimidine phosphoribosyltransferase family. In terms of assembly, homodimer.

Its subcellular location is the cytoplasm. The enzyme catalyses AMP + diphosphate = 5-phospho-alpha-D-ribose 1-diphosphate + adenine. The protein operates within purine metabolism; AMP biosynthesis via salvage pathway; AMP from adenine: step 1/1. Catalyzes a salvage reaction resulting in the formation of AMP, that is energically less costly than de novo synthesis. The chain is Adenine phosphoribosyltransferase from Mycoplasma capricolum subsp. capricolum (strain California kid / ATCC 27343 / NCTC 10154).